We begin with the raw amino-acid sequence, 632 residues long: tRNA uridine 5-carboxymethylaminomethyl modification enzyme MnmG (632 aa).

Residues 15–20, isoleucine 127, and serine 182 contribute to the FAD site; that span reads GAGHAG. Position 276 to 290 (276 to 290) interacts with NAD(+); that stretch reads GPRYCPSIEDKIVRF. Glutamine 373 lines the FAD pocket.

This sequence belongs to the MnmG family. In terms of assembly, homodimer. Heterotetramer of two MnmE and two MnmG subunits. FAD is required as a cofactor.

It is found in the cytoplasm. NAD-binding protein involved in the addition of a carboxymethylaminomethyl (cmnm) group at the wobble position (U34) of certain tRNAs, forming tRNA-cmnm(5)s(2)U34. The protein is tRNA uridine 5-carboxymethylaminomethyl modification enzyme MnmG of Streptococcus pyogenes serotype M4 (strain MGAS10750).